Consider the following 966-residue polypeptide: LRR receptor-like serine/threonine-protein kinase ERL1 (966 aa).

A signal peptide spans 1 to 25 (MKEKMQRMVLSLAMVGFMVFGVASA). The Extracellular portion of the chain corresponds to 26–582 (MNNEGKALMA…PLPKSRVFSR (557 aa)). The stretch at 40–63 (FSNLVNMLLDWDDVHNSDLCSWRG) is one LRR 1 repeat. N-linked (GlcNAc...) asparagine glycans are attached at residues Asn68 and Asn77. 20 LRR repeats span residues 75 to 94 (SLNL…IGDL), 95 to 118 (RNLQ…IGNC), 120 to 142 (SLVY…ISKL), 143 to 166 (KQLE…LTQI), 168 to 190 (NLKR…LYWN), 192 to 214 (VLQY…MCQL), 215 to 238 (TGLW…IGNC), 239 to 261 (TSFQ…NIGF), 262 to 285 (LQVA…IGLM), 286 to 311 (QALA…NLSF), 313 to 333 (GKLY…LGNM), 334 to 357 (SRLS…LGKL), 359 to 381 (QLFE…ISSC), 383 to 404 (ALNQ…AFRN), 405 to 429 (LGSL…LGHI), 431 to 453 (NLDK…LGDL), 454 to 476 (EHLL…EFGN), 478 to 500 (RSIQ…ELGQ), 501 to 525 (LQNL…LTNC), and 527 to 550 (TLVN…NFSR). Asn226 and Asn237 each carry an N-linked (GlcNAc...) asparagine glycan. 2 N-linked (GlcNAc...) asparagine glycosylation sites follow: Asn308 and Asn332. A glycan (N-linked (GlcNAc...) asparagine) is linked at Asn377. Residues Asn412, Asn441, and Asn460 are each glycosylated (N-linked (GlcNAc...) asparagine). N-linked (GlcNAc...) asparagine glycosylation is found at Asn532, Asn537, and Asn547. The chain crosses the membrane as a helical span at residues 583-603 (GALICIVLGVITLLCMIFLAV). The Cytoplasmic segment spans residues 604–966 (YKSMQQKKIL…FREVISKSSI (363 aa)). Phosphothreonine is present on residues Thr637 and Thr645. Residues 648-921 (LNEKFIIGYG…RVLLSLVPSL (274 aa)) form the Protein kinase domain. ATP-binding positions include 654–662 (IGYGASSTV) and Lys676. Phosphotyrosine is present on residues Tyr721 and Tyr760. Residue Asp773 is the Proton acceptor of the active site. Tyr815 carries the phosphotyrosine modification. At Thr823 the chain carries Phosphothreonine.

This sequence belongs to the protein kinase superfamily. Ser/Thr protein kinase family. In terms of assembly, homodimer and heterodimer with ERECTA and TMM. Interacts with EPF1 and EPF2. Interacts with SERK1, SERK2, SERK3/BAK1 and SERK4 in a EPF1-induced manner. In terms of tissue distribution, mostly expressed in developing organs, including bud clusters, flowers, siliques and young rosettes. Also detected in mature aboveground organs, such as leaves, stems and pedicels, but barely in roots.

The protein localises to the cell membrane. It catalyses the reaction L-seryl-[protein] + ATP = O-phospho-L-seryl-[protein] + ADP + H(+). The catalysed reaction is L-threonyl-[protein] + ATP = O-phospho-L-threonyl-[protein] + ADP + H(+). Receptor kinase that regulates inflorescence architecture and organ shape as well as stomatal patterning, including density and clustering, together with ER and ERL2. Redundantly involved with ER in procambial development regulation. Forms a functional ligand-receptor pair with EPF1 (AC Q8S8I4). Forms a constitutive complex with TMM involved in the recognition of the stomatal regulatory peptides EPF1, EPF2 and EPFL9/STOMAGEN. In Arabidopsis thaliana (Mouse-ear cress), this protein is LRR receptor-like serine/threonine-protein kinase ERL1.